Reading from the N-terminus, the 921-residue chain is Sodium/calcium exchanger 2 (921 aa).

Positions 1 to 20 (MAPLALVGVALLLGAPHCLG) are cleaved as a signal peptide. The Extracellular segment spans residues 21-68 (EATPTPSLPPPPANDSDASPGGCQGSYRCQPGVLLPVWEPDDPSLGDK). The interval 23-42 (TPTPSLPPPPANDSDASPGG) is disordered. An N-linked (GlcNAc...) asparagine glycan is attached at N34. The chain crosses the membrane as a helical span at residues 69-90 (AARAVVYFVAMVYMFLGLSIIA). Residues 91 to 130 (DRFMASIEVITSKEKEITITKANGETSVGTVRIWNETVSN) are Cytoplasmic-facing. Residues 131–152 (LTLMALGSSAPEILLSVIEVCG) form a helical membrane-spanning segment. One copy of the Alpha-1 repeat lies at 135-175 (ALGSSAPEILLSVIEVCGHNFQAGELGPGTIVGSAAFNMFV). Residues 153-164 (HNFQAGELGPGT) are Extracellular-facing. The helical transmembrane segment at 165 to 185 (IVGSAAFNMFVVIAVCVYVIP) threads the bilayer. Residues 186–196 (AGESRKIKHLR) lie on the Cytoplasmic side of the membrane. A helical membrane pass occupies residues 197-219 (VFFVTASWSIFAYVWLYLILAVF). Topologically, residues 220–222 (SPG) are extracellular. Residues 223 to 246 (VVQVWEALLTLVFFPVCVVFAWMA) form a helical membrane-spanning segment. The Cytoplasmic segment spans residues 247–720 (DKRLLFYKYV…DGSREERLPS (474 aa)). The interval 248–267 (KRLLFYKYVYKRYRTDPRSG) is putative calmodulin-binding region. A disordered region spans residues 372 to 391 (AADAARRPGANDGAPDDEDD). 2 Calx-beta domains span residues 384–483 (GAPD…VRLL) and 512–612 (ATVT…IELG). 14 residues coordinate Ca(2+): E407, D443, D468, D469, I471, E473, E476, D518, D519, D520, E536, D598, E599, and E600. S622 is modified (phosphoserine). E665 is a binding site for Ca(2+). Residues 721-740 (CFDYVMHFLTVFWKVLFACL) form a helical membrane-spanning segment. Topologically, residues 741 to 747 (PPTEYCH) are extracellular. The helical transmembrane segment at 748–770 (GWACFGVCILVIGLLTALIGDLA) threads the bilayer. Over 771-772 (SH) the chain is Cytoplasmic. The helical transmembrane segment at 773 to 791 (FGCTVGLKDSVNAVVFVAL) threads the bilayer. An Alpha-2 repeat occupies 790–826 (ALGTSIPDTFASKVAALQDQCADASIGNVTGSNAVNV). Over 792–822 (GTSIPDTFASKVAALQDQCADASIGNVTGSN) the chain is Extracellular. An N-linked (GlcNAc...) asparagine glycan is attached at N817. A helical transmembrane segment spans residues 823 to 843 (AVNVFLGLGVAWSVAAVYWAV). Over 844-854 (QGRPFEVRTGT) the chain is Cytoplasmic. A helical transmembrane segment spans residues 855–875 (LAFSVTLFTVFAFVGIAVLLY). The Extracellular portion of the chain corresponds to 876 to 892 (RRRPHIGGELGGPRGPK). Residues 893–909 (LATTALFLGLWFLYILF) form a helical membrane-spanning segment. Topologically, residues 910-921 (ASLEAYCHIRGF) are cytoplasmic.

It belongs to the Ca(2+):cation antiporter (CaCA) (TC 2.A.19) family. SLC8 subfamily. In terms of tissue distribution, detected in neocortex and hippocampus on pyramidal cells, astrocyte processes and dendrites (at protein level). Brain and skeletal muscle.

The protein resides in the cell membrane. It localises to the basolateral cell membrane. The protein localises to the perikaryon. It is found in the cell projection. Its subcellular location is the dendrite. The protein resides in the dendritic spine. The enzyme catalyses Ca(2+)(in) + 3 Na(+)(out) = Ca(2+)(out) + 3 Na(+)(in). Its activity is regulated as follows. Calcium transport is down-regulated by Na(+) and stimulated by Ca(2+). Functionally, mediates the electrogenic exchange of Ca(2+) against Na(+) ions across the cell membrane, and thereby contributes to the regulation of cytoplasmic Ca(2+) levels and Ca(2+)-dependent cellular processes. Contributes to cellular Ca(2+) homeostasis in excitable cells. Contributes to the rapid decrease of cytoplasmic Ca(2+) levels back to baseline after neuronal activation, and thereby contributes to modulate synaptic plasticity, learning and memory. Plays a role in regulating urinary Ca(2+) and Na(+) excretion. This is Sodium/calcium exchanger 2 (Slc8a2) from Rattus norvegicus (Rat).